The sequence spans 693 residues: Elongation factor G (693 aa).

One can recognise a tr-type G domain in the interval 8-282 (AKTRNIGIMA…AVIDYLPSPL (275 aa)). GTP is bound by residues 17 to 24 (AHVDAGKT), 81 to 85 (DTPGH), and 135 to 138 (NKMD).

This sequence belongs to the TRAFAC class translation factor GTPase superfamily. Classic translation factor GTPase family. EF-G/EF-2 subfamily.

Its subcellular location is the cytoplasm. Its function is as follows. Catalyzes the GTP-dependent ribosomal translocation step during translation elongation. During this step, the ribosome changes from the pre-translocational (PRE) to the post-translocational (POST) state as the newly formed A-site-bound peptidyl-tRNA and P-site-bound deacylated tRNA move to the P and E sites, respectively. Catalyzes the coordinated movement of the two tRNA molecules, the mRNA and conformational changes in the ribosome. This Streptococcus thermophilus (strain CNRZ 1066) protein is Elongation factor G.